We begin with the raw amino-acid sequence, 183 residues long: MDIDPYKEFGASVEVLSFLPSDFFPSNRDLLDTASALDREALESPEHCSPHHTALRQAILCWGELMNLATWVGSNLEDPASRELVVSYVNVNMGLKIRQLLWFHISCLTFGRETVLEYLVSFGVWIRTPPAYRPPNAPILSTLPETTVVRRRGRSPRRRTPSPRRRRSQSPRRRRSQSRESQC.

Residues 136 to 183 (NAPILSTLPETTVVRRRGRSPRRRTPSPRRRRSQSPRRRRSQSRESQC) form a disordered region. Residues 149–176 (VRRRGRSPRRRTPSPRRRRSQSPRRRRS) show a composition bias toward basic residues. Phosphoserine; by host occurs at positions 155, 162, and 170. One copy of the 1; half-length repeat lies at 155–161 (SPRRRTP). The interval 155–177 (SPRRRTPSPRRRRSQSPRRRRSQ) is 3 X 8 AA repeats of S-P-R-R-R-[PR]-S-Q. Residues 158-175 (RRTPSPRRRRSQSPRRRR) carry the Bipartite nuclear localization signal motif. Repeat copies occupy residues 162–169 (SPRRRRSQ) and 170–177 (SPRRRRSQ). The RNA binding stretch occupies residues 177–183 (QSRESQC).

The protein belongs to the orthohepadnavirus core antigen family. In terms of assembly, homodimerizes, then multimerizes. Interacts with cytosol exposed regions of viral L glycoprotein present in the reticulum-to-Golgi compartment. Interacts with human FLNB. Phosphorylated form interacts with host importin alpha; this interaction depends on the exposure of the NLS, which itself depends upon genome maturation and/or phosphorylation of the capsid protein. Interacts with host NUP153. In terms of processing, phosphorylated by host SRPK1, SRPK2, and maybe protein kinase C or GAPDH. Phosphorylation is critical for pregenomic RNA packaging. Protein kinase C phosphorylation is stimulated by HBx protein and may play a role in transport of the viral genome to the nucleus at the late step during the viral replication cycle.

The protein resides in the virion. The protein localises to the host cytoplasm. Self assembles to form an icosahedral capsid. Most capsids appear to be large particles with an icosahedral symmetry of T=4 and consist of 240 copies of capsid protein, though a fraction forms smaller T=3 particles consisting of 180 capsid proteins. Entering capsids are transported along microtubules to the nucleus. Phosphorylation of the capsid is thought to induce exposure of nuclear localization signal in the C-terminal portion of the capsid protein that allows binding to the nuclear pore complex via the importin (karyopherin-) alpha and beta. Capsids are imported in intact form through the nuclear pore into the nuclear basket, where it probably binds NUP153. Only capsids that contain the mature viral genome can release the viral DNA and capsid protein into the nucleoplasm. Immature capsids get stuck in the basket. Capsids encapsulate the pre-genomic RNA and the P protein. Pre-genomic RNA is reverse-transcribed into DNA while the capsid is still in the cytoplasm. The capsid can then either be directed to the nucleus, providing more genomes for transcription, or bud through the endoplasmic reticulum to provide new virions. The sequence is that of Capsid protein from Homo sapiens (Human).